We begin with the raw amino-acid sequence, 338 residues long: Peroxidase 15 (338 aa).

Residues 1-22 form the signal peptide; that stretch reads MARIGSFLIILYLIYALTLCIC. 4 disulfides stabilise this stretch: Cys45-Cys125, Cys78-Cys83, Cys131-Cys332, and Cys210-Cys242. The Proton acceptor role is filled by His76. Asp77, Val80, Gly82, Asp84, and Ser86 together coordinate Ca(2+). Substrate is bound at residue Pro173. Asn176 carries an N-linked (GlcNAc...) asparagine glycan. His203 lines the heme b pocket. Ca(2+) is bound at residue Thr204. N-linked (GlcNAc...) asparagine glycans are attached at residues Asn219 and Asn250. Ca(2+) contacts are provided by Asp255, Ser258, and Asp263.

It belongs to the peroxidase family. Classical plant (class III) peroxidase subfamily. Requires heme b as cofactor. It depends on Ca(2+) as a cofactor.

Its subcellular location is the secreted. It catalyses the reaction 2 a phenolic donor + H2O2 = 2 a phenolic radical donor + 2 H2O. Functionally, removal of H(2)O(2), oxidation of toxic reductants, biosynthesis and degradation of lignin, suberization, auxin catabolism, response to environmental stresses such as wounding, pathogen attack and oxidative stress. These functions might be dependent on each isozyme/isoform in each plant tissue. The chain is Peroxidase 15 (PER15) from Arabidopsis thaliana (Mouse-ear cress).